Reading from the N-terminus, the 346-residue chain is MSLNKAVLEIRQRIKVKPSPTNEPAASWTGTDLVNGVQTKTLTVIFKSAGCRWGKAGGCTMCGYVYDCASEPPSLEDYMAQLEKAMRKAEKFPEFMVKIFTSGSFLDEQEVLPEARDAILKNLTEDPRVTKVLVETRPNYVTEENVQACLSILKNKPFELAFGLETSSDKIRRDSINKGFTFQDFVHAAETAKKYGVTVKVYLMLKPLFLSERQAMEDIIRSIDDAAPYADTISINLCNVQKGTLVEALWEKGQYRPPWLWSIIEILRQAKAAHPELPLMSDPVGAGSKRGPHNCKICSSEVADSLRTFSLTQNPADLSTADCECKELWKKVLEIEDFTYGTPILD.

Residues 36–276 enclose the Radical SAM core domain; it reads GVQTKTLTVI…LRQAKAAHPE (241 aa). The [4Fe-4S] cluster site is built by C51, C59, and C62.

It belongs to the radical SAM superfamily. RaSEA family. Forms a robust complex with the archaeosine synthase alpha subunit ArcS. This complex likely consists of an alpha(2)beta(2) heterotetrameric structure. The cofactor is [4Fe-4S] cluster.

The enzyme catalyses 7-N-[(5S)-5-amino-5-carboxypentyl]formamidino-7-deazaguanosine(15) in tRNA + S-adenosyl-L-methionine = archaeosine(15) in tRNA + L-1-piperideine-6-carboxylate + 5'-deoxyadenosine + L-methionine + 2 H(+). The protein operates within tRNA modification; archaeosine-tRNA biosynthesis. Its function is as follows. Radical SAM enzyme involved in the synthesis of archaeosine, a modified nucleoside present in the dihydrouridine loop (D-loop) of archaeal tRNAs. Catalyzes the cleavage of the C(epsilon)-N bond of the lysine moiety of q0kN15-tRNA, leading to the formation of archaeosine at position 15 in tRNAs. This chain is Archaeosine synthase subunit beta, found in Methanosarcina acetivorans (strain ATCC 35395 / DSM 2834 / JCM 12185 / C2A).